A 640-amino-acid chain; its full sequence is Uromodulin (640 aa).

The signal sequence occupies residues 1 to 24 (MGQPSLTWMLMVVVASWFITTAAT). Positions 28 to 64 (EARWCSECHSNATCTEDEAVTTCTCQEGFTGDGLTCV) constitute an EGF-like 1 domain. Intrachain disulfides connect Cys-32/Cys-41, Cys-35/Cys-50, Cys-52/Cys-63, Cys-69/Cys-83, Cys-77/Cys-92, Cys-94/Cys-106, Cys-112/Cys-126, Cys-120/Cys-135, Cys-137/Cys-148, Cys-150/Cys-161, Cys-155/Cys-170, Cys-174/Cys-267, Cys-195/Cys-282, Cys-217/Cys-255, Cys-223/Cys-287, Cys-248/Cys-256, Cys-297/Cys-306, Cys-300/Cys-315, Cys-317/Cys-347, Cys-335/Cys-425, and Cys-366/Cys-389. Asn-38 carries an N-linked (GlcNAc...) asparagine glycan. In terms of domain architecture, EGF-like 2; calcium-binding spans 65 to 107 (DLDECAIPGAHNCSANSSCVNTPGSFSCVCPEGFRLSPGLGCT). 2 N-linked (GlcNAc...) asparagine glycosylation sites follow: Asn-76 and Asn-80. In terms of domain architecture, EGF-like 3; calcium-binding spans 108-149 (DVDECAEPGLSHCHALATCVNVVGSYLCVCPAGYRGDGWHCE). The interval 150 to 171 (CSPGSCGPGLDCVPEGDALVCA) is beta hairpin. The interval 172-291 (DPCQAHRTLD…CHLAYCTDPS (120 aa)) is D10C. N-linked (GlcNAc...) (complex) asparagine glycosylation is present at Asn-232. Asn-275 is a glycosylation site (N-linked (GlcNAc...) (high mannose) asparagine). The EGF-like 4 domain maps to 292-323 (SVEGTCEECSIDEDCKSNNGRWHCQCKQDFNI). Asn-322 is a glycosylation site (N-linked (GlcNAc...) (complex) asparagine). Residues 334–429 (ECGANDMKVS…KINFACSYPL (96 aa)) are ZP-N. Residues 334–589 (ECGANDMKVS…PTCSGTRFRS (256 aa)) form the ZP domain. The N-linked (GlcNAc...) (complex) asparagine glycan is linked to Asn-396. Residues 430-453 (DMKVSLKTALQPMVSALNIRVGGT) form a flexible ZP-N/ZP-C linker; important for secretion and polymerization into filaments region. The tract at residues 454–465 (GMFTVRMALFQT) is internal hydrophobic patch (IHP). The ZP-C stretch occupies residues 454–589 (GMFTVRMALF…PTCSGTRFRS (136 aa)). Intrachain disulfides connect Cys-506/Cys-566, Cys-527/Cys-582, and Cys-571/Cys-578. Residue Asn-513 is glycosylated (N-linked (GlcNAc...) (complex) asparagine; alternate). N-linked (GlcNAc...) (high mannose) asparagine; alternate glycosylation occurs at Asn-513. The tract at residues 586–589 (RFRS) is essential for cleavage by HPN. An external hydrophobic patch (EHP); regulates polymerization into filaments region spans residues 598 to 606 (VLNLGPITR). A lipid anchor (GPI-anchor amidated serine) is attached at Ser-614. The propeptide at 615 to 640 (RAFSSLGLLKVWLPLLLSATLTLTFQ) is removed in mature form.

As to quaternary structure, homodimer that then polymerizes into long filaments. The filaments can additionally assemble laterally to form a sheet. The filaments consist of a zigzag-shaped backbone with laterally protruding arms which interact with bacterial adhesin fimH. Two fimH molecules can bind to a single UMOD monomer. N-glycosylated. N-glycan heterogeneity at Asn-232: Hex7HexNAc6 (major) and dHex1Hex7HexNAc6 (minor); at Asn-322: dHex1Hex6HexNAc5 (minor), dHex1Hex7HexNAc6 (major) and dHex1Hex8HexNAc7 (minor); at Asn-396: Hex6HexNAc5 (major), dHex1Hex6HexNAc5 (minor) and Hex7HexNAc6 (minor). Glycosylated Asn-232 interacts with E.coli adhesin fimH. Other complex glycosylation sites may serve as binding sites for proteins from other bacteria inclduding K.pneumoniae, P.aeruginosa and S.mitis. Post-translationally, proteolytically cleaved at a conserved C-terminal proteolytic cleavage site to generate the secreted form found in urine. This cleavage is catalyzed by HPN. In terms of tissue distribution, expressed in the tubular cells of the kidney. Most abundant protein in normal urine (at protein level). Synthesized exclusively in the kidney. Expressed exclusively by epithelial cells of the thick ascending limb of Henle's loop (TALH) and of distal convoluted tubule lumen.

It is found in the apical cell membrane. The protein localises to the basolateral cell membrane. It localises to the cell projection. Its subcellular location is the cilium membrane. The protein resides in the secreted. Functionally, functions in biogenesis and organization of the apical membrane of epithelial cells of the thick ascending limb of Henle's loop (TALH), where it promotes formation of complex filamentous gel-like structure that may play a role in the water barrier permeability. May serve as a receptor for binding and endocytosis of cytokines (IL-1, IL-2) and TNF. Facilitates neutrophil migration across renal epithelia. In terms of biological role, in the urine, may contribute to colloid osmotic pressure, retards passage of positively charged electrolytes, and inhibits formation of liquid containing supersaturated salts and subsequent formation of salt crystals. Protects against urinary tract infections by binding to type 1 fimbriated E.coli. Binds to bacterial adhesin fimH which mediates the stable formation of bacterial aggregates, prevents the binding of E.coli to uroplakins UPK1A and UPK1B which act as urothelial receptors for type I fimbriae, and allows for pathogen clearance through micturation. Also promotes aggregation of other bacteria including K.pneumoniae, P.aeruginosa and S.mitis and so may also protect against other uropathogens. The sequence is that of Uromodulin (UMOD) from Homo sapiens (Human).